The sequence spans 474 residues: Nuclear hormone receptor family member nhr-91 (474 aa).

The interval 50-69 (SMTPSFSQTESPNSETDDST) is disordered. Polar residues predominate over residues 51–69 (MTPSFSQTESPNSETDDST). Residues 97–172 (SKLCSVCGDK…KGMLTEAVRE (76 aa)) constitute a DNA-binding region (nuclear receptor). 2 NR C4-type zinc fingers span residues 100–120 (CSVCGDKSTGLHYGAATCEGC) and 136–155 (CSQDNCCEIDKQNRNRCQSC). The NR LBD domain occupies 215–474 (SGKKLIKELV…KNPRRLVFDE (260 aa)).

This sequence belongs to the nuclear hormone receptor family.

It localises to the nucleus. Functionally, orphan nuclear receptor. This Caenorhabditis elegans protein is Nuclear hormone receptor family member nhr-91 (nhr-91).